Reading from the N-terminus, the 179-residue chain is Small ribosomal subunit protein uS7 (179 aa).

Belongs to the universal ribosomal protein uS7 family. Part of the 30S ribosomal subunit. Contacts proteins S9 and S11. Cross-links to IF3 and the P and E site tRNAs.

One of the primary rRNA binding proteins, it binds directly to 16S rRNA where it nucleates assembly of the head domain of the 30S subunit. Is located at the subunit interface close to the decoding center, where it has been shown to contact mRNA. Has been shown to contact tRNA in both the P and E sites; it probably blocks exit of the E site tRNA. In terms of biological role, protein S7 is also a translational repressor protein; it regulates the expression of the str operon members to different degrees by binding to its mRNA. In Escherichia coli (strain K12), this protein is Small ribosomal subunit protein uS7 (rpsG).